Reading from the N-terminus, the 76-residue chain is Alpha/kappa-conotoxin-like fe14.2 (76 aa).

A signal peptide spans 1 to 24; that stretch reads MPSVRSVTCCCLLWMMLSVQLVTP. Residues 25–39 constitute a propeptide that is removed on maturation; that stretch reads GSPGTAQLSGQRTAR. Cystine bridges form between Cys46-Cys61 and Cys50-Cys63. At Arg64 the chain carries Arginine amide. The propeptide occupies 65–76; the sequence is GKRDVVSSSMAV.

This sequence belongs to the conotoxin J superfamily. Expressed by the venom duct.

It localises to the secreted. Its function is as follows. Highly inhibits both nicotinic acetylcholine receptors (neuronal (alpha-3/beta-4) and muscular (alpha-1/beta-1/epsilon/delta) subtypes) and the voltage-gated potassium channel Kv1.6/KCNA6 subtype. The chain is Alpha/kappa-conotoxin-like fe14.2 from Conus ferrugineus (Cone snail).